The sequence spans 250 residues: Transcriptional activator protein ExpR (250 aa).

The HTH luxR-type domain maps to Lys173–Asn238. A DNA-binding region (H-T-H motif) is located at residues Tyr197 to Gly216.

It belongs to the autoinducer-regulated transcriptional regulatory protein family.

Its function is as follows. Functions as an OHLL responsive transcriptional regulator that acts in virulence (soft rot disease) through the activation of genes for plant tissue macerating enzymes. The sequence is that of Transcriptional activator protein ExpR (expR) from Dickeya dadantii (strain 3937) (Erwinia chrysanthemi (strain 3937)).